The primary structure comprises 326 residues: MPWDTRPGRSANGGPEGPGAARLRVQKQCRKSSFAFYLAVRDQLPVWLLEDIRASEAFHCDERGRAAAYSPSEALLYALVHDHQAYAHYLLATFPRCALAPPSAGFRCCTAPGPHVALAVRYNRVGILRRILRTVQDFPVEERVRLLDRRGCSRVEGGGTSLHVACELARPECLFLLLGHGASPGLRDGSGFTPLELLLRQLNQDASSAPTKAEAASATVNAATANTTSSEEVCQRRLLLLDLLVLYTPGGVVGPARCELLGDQLRWQRLLGEDKFQWLAGLAPPSLFVRAMQVLVTTISPGRFPEALDELPLPSFLQPLDLTGKG.

The tract at residues 1 to 20 (MPWDTRPGRSANGGPEGPGA) is disordered. An ANK 1 repeat occupies 70-99 (SPSEALLYALVHDHQAYAHYLLATFPRCAL). Residues 108–109 (CC) carry the Important role in both nutrient sensing and binding/regulation of IMPDH2 motif. ANK repeat units follow at residues 111-140 (APGPHVALAVRYNRVGILRRILRTVQDFPV) and 157-186 (GGGTSLHVACELARPECLFLLLGHGASPGL).

In terms of assembly, part of an E3 ubiquitin-protein ligase complex with Elongin BC (ELOB and ELOC), CUL5 and ANKRD9. Interacts with IMPDH2; leading to ubiquitination of IMPDH2 and its subsequent proteasomal degradation.

It localises to the cytoplasmic vesicle. It is found in the cytoplasm. The protein localises to the cytosol. It functions in the pathway protein modification; protein ubiquitination. Substrate receptor subunit of a cullin-RING superfamily E3 ligase complex (CUL5-based E3 ubiquitin ligase complex) which mediates the ubiquitination and subsequent proteasomal degradation of target proteins. Depending of the metabolic state of the cell, promotes the proteasomal degradation of IMPDH2, the rate-limiting enzyme in GTP biosynthesis or protects IMPDH2 by stabilizing IMPDH2 filaments assembly. Implicated in different cellular processes, like copper homeostasis and cell proliferation. This Mus musculus (Mouse) protein is Ankyrin repeat domain-containing protein 9 (Ankrd9).